Here is a 781-residue protein sequence, read N- to C-terminus: Potassium transporter 5 (781 aa).

The span at 1 to 11 (MTEPLHTSSNG) shows a compositional bias: polar residues. The disordered stretch occupies residues 1-24 (MTEPLHTSSNGGAERGPNAAFESE). Topologically, residues 1-63 (MTEPLHTSSN…AKVGWATTLH (63 aa)) are cytoplasmic. Residues 64 to 84 (LAFQSIGVVYGDMGTSPLYVF) traverse the membrane as a helical segment. At 85-100 (SSTFTNGIKDTNDILG) the chain is on the extracellular side. A helical membrane pass occupies residues 101-121 (VMSLIIYTVVLLPLIKYCFIV). Over 122–187 (LRANDNGDGG…EKMENSPNFK (66 aa)) the chain is Cytoplasmic. A helical membrane pass occupies residues 188–208 (IILFLVTILATSMVIGDGVLT). The Extracellular segment spans residues 209 to 225 (PCISVLSAVGGIKESAK). A helical membrane pass occupies residues 226-246 (SLTQGQIAGIAIAILIVLFLV). Residues 247–257 (QRFGTDKVGYS) lie on the Cytoplasmic side of the membrane. A helical membrane pass occupies residues 258-278 (FGPIILTWFIFIAGTGVYNLF). Residues 279 to 304 (KHDTGVLKAFNPKYIVDYFERNGKQG) lie on the Extracellular side of the membrane. Residues 305 to 325 (WISLGGVILCITGTEAMFADL) form a helical membrane-spanning segment. The Cytoplasmic segment spans residues 326–334 (GHFNVRAIQ). A helical membrane pass occupies residues 335–355 (IGFSVVLLPSVLLAYIGQAAY). Topologically, residues 356–381 (LRIYPEHVADTFYKSIPDPLYWPTFV) are extracellular. Residues 382 to 402 (VAVAAAIIASQAMISGAFAII) traverse the membrane as a helical segment. Topologically, residues 403 to 426 (AQSQILGCFPRVRVIHTSTKFHGQ) are cytoplasmic. A helical transmembrane segment spans residues 427 to 447 (VYIPEINYVLMVLCVAVTAIF). Residues 448–458 (QTTDKIGNAYG) are Extracellular-facing. A helical transmembrane segment spans residues 459–479 (IAVVFVMFITTLLVTLVMVMI). Over 480–481 (WK) the chain is Cytoplasmic. A helical transmembrane segment spans residues 482–502 (TSLLWIALFPVIFGGAELIYL). Topologically, residues 503-512 (SSAFYKFTQG) are extracellular. A helical membrane pass occupies residues 513–533 (GYLPLVFSAILMFIMATWHYV). Over 534–781 (HVHRYKYELR…LLRVGMTYEI (248 aa)) the chain is Cytoplasmic. A disordered region spans residues 681–707 (VTDPTSEVQDAMSSRNNSDQHTTEPRN). A compositionally biased stretch (polar residues) spans 683–700 (DPTSEVQDAMSSRNNSDQ).

Belongs to the HAK/KUP transporter (TC 2.A.72.3) family. Expressed in root epidermis, parenchyma of stele tissue and primordial of the lateral root, root-shoot junctions and leaf sheaths. Expressed in germinated embryonic tissue, young tillers, flower organs and pedicels.

The protein resides in the cell membrane. It carries out the reaction K(+)(in) = K(+)(out). High-affinity potassium transporter. Its potassium transporter activity does not seem to be affected by high sodium and low potassium concentrations in the extracellular environment. Invloved in salt stress tolerance by enhancing root potassium uptake and translocation to the shoot to prevent sodium influx during salt stress. Involved in the positive regulation of disease resistance against the rice grassy stunt virus by promoting potassium transport and increasing endogenous plant potassium. This Oryza sativa subsp. japonica (Rice) protein is Potassium transporter 5 (HAK5).